Reading from the N-terminus, the 479-residue chain is Cruciferin PGCRURSE5 (479 aa).

A signal peptide spans 1 to 23; the sequence is MVKLAHLLVATFGVLLVLNGCLA. Disulfide bonds link C37-C70 and C113-C296. In terms of domain architecture, Cupin type-1 1 spans 42–241; that stretch reads LDVLQPTETI…ALKMQLRLAQ (200 aa). Phosphothreonine is present on T116. Disordered stretches follow at residues 117-144, 196-219, and 271-291; these read FMDSQPMQGQGQQGQQGQQGQQQQGFRD, RTFRLAGNNPQGGSHQQQQQQQQN, and YESEQWRHPRGPPQSPQDNGL. Residues 124–141 are compositionally biased toward low complexity; it reads QGQGQQGQQGQQGQQQQG. Residues 302–451 form the Cupin type-1 2 domain; the sequence is ENIDDPARAD…AFQISLEEAR (150 aa). Phosphothreonine is present on residues T415 and T440.

Belongs to the 11S seed storage protein (globulins) family. As to quaternary structure, hexamer; each subunit is composed of an acidic and a basic chain derived from a single precursor and linked by a disulfide bond.

This is a seed storage protein. This Raphanus sativus (Radish) protein is Cruciferin PGCRURSE5 (CRURS).